The sequence spans 391 residues: Phosphoglycerate kinase (391 aa).

Substrate contacts are provided by residues 21–23 (DLN), R36, 59–62 (HLGR), R113, and R146. ATP is bound by residues K197, E319, and 345 to 348 (GGDT).

Belongs to the phosphoglycerate kinase family. Monomer.

The protein resides in the cytoplasm. It catalyses the reaction (2R)-3-phosphoglycerate + ATP = (2R)-3-phospho-glyceroyl phosphate + ADP. The protein operates within carbohydrate degradation; glycolysis; pyruvate from D-glyceraldehyde 3-phosphate: step 2/5. The chain is Phosphoglycerate kinase from Stenotrophomonas maltophilia (strain K279a).